Reading from the N-terminus, the 159-residue chain is uncharacterized protein (159 aa).

3 helical membrane passes run 16-36 (IVLP…AFIF), 84-104 (VYAG…LLII), and 112-132 (VFFY…LLPV).

The protein localises to the cell membrane. This is an uncharacterized protein from Bacillus subtilis (strain 168).